The primary structure comprises 428 residues: Light-independent protochlorophyllide reductase subunit N (428 aa).

Cysteine 29, cysteine 54, and cysteine 115 together coordinate [4Fe-4S] cluster.

Belongs to the BchN/ChlN family. As to quaternary structure, protochlorophyllide reductase is composed of three subunits; BchL, BchN and BchB. Forms a heterotetramer of two BchB and two BchN subunits. Requires [4Fe-4S] cluster as cofactor.

The enzyme catalyses chlorophyllide a + oxidized 2[4Fe-4S]-[ferredoxin] + 2 ADP + 2 phosphate = protochlorophyllide a + reduced 2[4Fe-4S]-[ferredoxin] + 2 ATP + 2 H2O. It participates in porphyrin-containing compound metabolism; bacteriochlorophyll biosynthesis (light-independent). Its function is as follows. Component of the dark-operative protochlorophyllide reductase (DPOR) that uses Mg-ATP and reduced ferredoxin to reduce ring D of protochlorophyllide (Pchlide) to form chlorophyllide a (Chlide). This reaction is light-independent. The NB-protein (BchN-BchB) is the catalytic component of the complex. In Cereibacter sphaeroides (strain KD131 / KCTC 12085) (Rhodobacter sphaeroides), this protein is Light-independent protochlorophyllide reductase subunit N.